Consider the following 320-residue polypeptide: Atrochrysone carboxyl ACP thioesterase (320 aa).

H103, H105, D107, and H108 together coordinate Zn(2+). The active-site Proton donor/acceptor is the D107.

It belongs to the metallo-beta-lactamase superfamily. Requires Zn(2+) as cofactor.

It carries out the reaction atrochrysone carboxyl-[ACP] + H2O = atrochrysone carboxylate + holo-[ACP] + H(+). Its pathway is secondary metabolite biosynthesis. Atrochrysone carboxyl ACP thioesterase; part of the gene cluster that mediates the biosynthesis of geodin, an intermediate in the biosynthesis of other natural products. The pathway begins with the synthesis of atrochrysone thioester by the polyketide synthase (PKS) gedC. The atrochrysone carboxyl ACP thioesterase gedB then breaks the thioester bond and releases the atrochrysone carboxylic acid from gedC. The atrochrysone carboxylic acid is then converted to atrochrysone which is further transformed into emodinanthrone. The next step is performed by the emodinanthrone oxygenase gedH that catalyzes the oxidation of emodinanthrone to emodin. Emodin O-methyltransferase encoded probably by gedA then catalyzes methylation of the 8-hydroxy group of emodin to form questin. Ring cleavage of questin by questin oxidase gedK leads to desmethylsulochrin via several intermediates including questin epoxide. Another methylation step probably catalyzed by methyltransferase gedG leads to the formation of sulochrin which is further converted to dihydrogeodin by the sulochrin halogenase gedL. Finally, the dihydrogeodin oxidase gedJ catalyzes the stereospecific phenol oxidative coupling reaction converting dihydrogeodin to geodin. This chain is Atrochrysone carboxyl ACP thioesterase, found in Aspergillus terreus (strain NIH 2624 / FGSC A1156).